The primary structure comprises 277 residues: Large ribosomal subunit protein uL2 (277 aa).

The segment at 223-264 (VAMNPVDHPHGGGEGKTAAGRHPVSPWGTPSKGSRTRRNKRT) is disordered.

Belongs to the universal ribosomal protein uL2 family. As to quaternary structure, part of the 50S ribosomal subunit. Forms a bridge to the 30S subunit in the 70S ribosome.

In terms of biological role, one of the primary rRNA binding proteins. Required for association of the 30S and 50S subunits to form the 70S ribosome, for tRNA binding and peptide bond formation. It has been suggested to have peptidyltransferase activity; this is somewhat controversial. Makes several contacts with the 16S rRNA in the 70S ribosome. The sequence is that of Large ribosomal subunit protein uL2 from Nitrosomonas eutropha (strain DSM 101675 / C91 / Nm57).